We begin with the raw amino-acid sequence, 315 residues long: Small ribosomal subunit biogenesis GTPase RsgA (315 aa).

Residues 79-243 enclose the CP-type G domain; the sequence is LSKESHILGA…LIDTPGIKGF (165 aa). GTP is bound by residues 128–131 and 182–190; these read NKID and GHSGVGKSS. 4 residues coordinate Zn(2+): Cys-267, Cys-272, His-274, and Cys-280.

The protein belongs to the TRAFAC class YlqF/YawG GTPase family. RsgA subfamily. In terms of assembly, monomer. Associates with 30S ribosomal subunit, binds 16S rRNA. Zn(2+) serves as cofactor.

It is found in the cytoplasm. Functionally, one of several proteins that assist in the late maturation steps of the functional core of the 30S ribosomal subunit. Helps release RbfA from mature subunits. May play a role in the assembly of ribosomal proteins into the subunit. Circularly permuted GTPase that catalyzes slow GTP hydrolysis, GTPase activity is stimulated by the 30S ribosomal subunit. The protein is Small ribosomal subunit biogenesis GTPase RsgA of Porphyromonas gingivalis (strain ATCC BAA-308 / W83).